A 206-amino-acid polypeptide reads, in one-letter code: Small ribosomal subunit protein uS4 (206 aa).

One can recognise an S4 RNA-binding domain in the interval 96-156 (TRLDNVVYRM…EKSRTQARIK (61 aa)).

This sequence belongs to the universal ribosomal protein uS4 family. Part of the 30S ribosomal subunit. Contacts protein S5. The interaction surface between S4 and S5 is involved in control of translational fidelity.

Functionally, one of the primary rRNA binding proteins, it binds directly to 16S rRNA where it nucleates assembly of the body of the 30S subunit. Its function is as follows. With S5 and S12 plays an important role in translational accuracy. The protein is Small ribosomal subunit protein uS4 of Shewanella baltica (strain OS223).